The primary structure comprises 593 residues: Autophagy-related protein 22-2 (593 aa).

A helical membrane pass occupies residues 42 to 62; the sequence is YGVAAEVFAVCGVGSFLPLTL. A glycan (N-linked (GlcNAc...) asparagine) is linked at N90. 3 helical membrane passes run 112-132, 159-179, and 181-201; these read SFAMYTFSLAVLIQALTLVSF, LFMLIVPPVFVLGALLVVIGV, and CLGSSFVVLNSFLPILVANDP. The segment at 228–261 is disordered; the sequence is SWTDEEDTGDHAGPAGSKKAVEPEKASSSTSPEL. Transmembrane regions (helical) follow at residues 271-291, 305-325, 377-397, and 415-435; these read GVGLGYCAAVLVQILSILLLF, LPLRFVLLLVGIWWAAFTVVC, VVVFLAAWFLISDAIATVSGT, and LLSITATMSGMAGAFLWPIVA. The N-linked (GlcNAc...) asparagine glycan is linked to N443. Transmembrane regions (helical) follow at residues 448 to 468, 480 to 500, 525 to 545, and 548 to 568; these read LCIALFEIIPLYGMLAYIPFI, WEIFPLGIVHGVVSGGLASYC, KGSSFVGPAIVGALIDATGSV, and GFIFIGVLILLPMPLVWLVNA.

Belongs to the ATG22 family.

It is found in the vacuole membrane. In terms of biological role, vacuolar effluxer which mediate the efflux of amino acids resulting from autophagic degradation. The release of autophagic amino acids allows the maintenance of protein synthesis and viability during nitrogen starvation. This Emericella nidulans (strain FGSC A4 / ATCC 38163 / CBS 112.46 / NRRL 194 / M139) (Aspergillus nidulans) protein is Autophagy-related protein 22-2 (atg22-2).